A 1396-amino-acid polypeptide reads, in one-letter code: G2/mitotic-specific cyclin-B3 (1396 aa).

3 disordered regions span residues 1 to 64, 259 to 398, and 477 to 500; these read MPPP…TNAS, KEKP…PQME, and TTEK…PGEL. The span at 10–34 shows a compositional bias: basic and acidic residues; the sequence is SKLETEKAQSNKITPREEQQSEKIG. The D-box signature appears at 54 to 62; sequence RSVFEDVTN. Residues 264 to 273 are compositionally biased toward basic residues; sequence VKKPHFRKKK. The segment covering 306–315 has biased composition (polar residues); it reads LQENTNNKDA. Ser703 carries the phosphoserine modification. The tract at residues 775 to 796 is disordered; that stretch reads VDEPLSHQSPHIQNHSDTTKEA. A compositionally biased stretch (polar residues) spans 780-790; sequence SHQSPHIQNHS.

Belongs to the cyclin family. Cyclin AB subfamily. In terms of assembly, interacts with CDK2 kinase. Ubiquitinated. Ubiquitination leads to its degradation during anaphase entry, after degradation of CCNB1. Expressed in testis. Also expressed in the fetal ovary, but not in the adult.

The protein localises to the nucleus. Its function is as follows. Cyclins are positive regulatory subunits of the cyclin-dependent kinases (CDKs), and thereby play an essential role in the control of the cell cycle, notably via their destruction during cell division. Its tissue specificity suggest that it may be required during early meiotic prophase I. The polypeptide is G2/mitotic-specific cyclin-B3 (Ccnb3) (Mus musculus (Mouse)).